Reading from the N-terminus, the 119-residue chain is Large ribosomal subunit protein uL22 (119 aa).

This sequence belongs to the universal ribosomal protein uL22 family. In terms of assembly, part of the 50S ribosomal subunit.

Functionally, this protein binds specifically to 23S rRNA; its binding is stimulated by other ribosomal proteins, e.g. L4, L17, and L20. It is important during the early stages of 50S assembly. It makes multiple contacts with different domains of the 23S rRNA in the assembled 50S subunit and ribosome. The globular domain of the protein is located near the polypeptide exit tunnel on the outside of the subunit, while an extended beta-hairpin is found that lines the wall of the exit tunnel in the center of the 70S ribosome. In Rickettsia rickettsii (strain Iowa), this protein is Large ribosomal subunit protein uL22.